Here is a 296-residue protein sequence, read N- to C-terminus: GTPase Era (296 aa).

In terms of domain architecture, Era-type G spans 7 to 174; that stretch reads RAGFVAIVGR…LDEIAAGLPQ (168 aa). The tract at residues 15 to 22 is G1; the sequence is GRPNVGKS. 15–22 lines the GTP pocket; that stretch reads GRPNVGKS. Residues 41 to 45 are G2; that stretch reads QTTRH. The interval 62–65 is G3; that stretch reads DTPG. GTP contacts are provided by residues 62–66 and 123–126; these read DTPGF and SKID. The segment at 123 to 126 is G4; that stretch reads SKID. Positions 153-155 are G5; it reads VSA. The 77-residue stretch at 205–281 folds into the KH type-2 domain; it reads VGDELPYGCT…HLEIYIKVRK (77 aa).

Belongs to the TRAFAC class TrmE-Era-EngA-EngB-Septin-like GTPase superfamily. Era GTPase family. Monomer.

It localises to the cytoplasm. The protein localises to the cell inner membrane. In terms of biological role, an essential GTPase that binds both GDP and GTP, with rapid nucleotide exchange. Plays a role in 16S rRNA processing and 30S ribosomal subunit biogenesis and possibly also in cell cycle regulation and energy metabolism. The sequence is that of GTPase Era from Bordetella parapertussis (strain 12822 / ATCC BAA-587 / NCTC 13253).